Here is a 290-residue protein sequence, read N- to C-terminus: Sodium/potassium-transporting ATPase subunit beta-2 (290 aa).

Topologically, residues 1 to 39 (MVIQKEKKSCGQVVEEWKEFVWNPRTHQFMGRTGTSWAF) are cytoplasmic. The helical; Signal-anchor for type II membrane protein transmembrane segment at 40–67 (ILLFYLVFYGFLTAMFTLTMWVMLQTVS) threads the bilayer. The Extracellular portion of the chain corresponds to 68–290 (DHTPKYQDRL…VAFKLRINKT (223 aa)). N-linked (GlcNAc...) asparagine glycans are attached at residues Asn96 and Asn118. Cys129 and Cys150 are disulfide-bonded. N-linked (GlcNAc...) asparagine glycans are attached at residues Asn153 and Asn159. Cys160 and Cys177 are disulfide-bonded. N-linked (GlcNAc...) asparagine glycans are attached at residues Asn193, Asn197, and Asn238. Residues 193-290 (NQSMNVTCAG…VAFKLRINKT (98 aa)) form an immunoglobulin-like region. A disulfide bridge connects residues Cys200 and Cys261.

The protein belongs to the X(+)/potassium ATPases subunit beta family. The sodium/potassium-transporting ATPase is composed of a catalytic alpha subunit, an auxiliary non-catalytic beta subunit and an additional regulatory subunit. Interacts with BSG.

The protein resides in the cell membrane. Functionally, this is the non-catalytic component of the active enzyme, which catalyzes the hydrolysis of ATP coupled with the exchange of Na(+) and K(+) ions across the plasma membrane. The exact function of the beta-2 subunit is not known. Its function is as follows. Mediates cell adhesion of neurons and astrocytes, and promotes neurite outgrowth. The polypeptide is Sodium/potassium-transporting ATPase subunit beta-2 (ATP1B2) (Ochotona curzoniae (Black-lipped pika)).